The sequence spans 515 residues: Fatty acyl-CoA reductase 1 (515 aa).

Topologically, residues 1-465 (MVSIPEYYEG…ARKHLNKLRN (465 aa)) are cytoplasmic. A necessary and sufficient for PEX19-mediated localization into peroxisome membrane region spans residues 451–507 (SGLPAARKHLNKLRNIRYGFNTILVILIWRIFIARSQMARNIWYFVVSLCYKFLSYF). Residues 466-483 (IRYGFNTILVILIWRIFI) form a helical membrane-spanning segment. Residues 484–515 (ARSQMARNIWYFVVSLCYKFLSYFRASSTMRY) are Peroxisomal-facing.

Belongs to the fatty acyl-CoA reductase family. In terms of assembly, interacts with PEX19; PEX19 mediates the targeting of FAR1 to peroxisomes. As to expression, widely expressed. Expressed in all tissues examined. Highest expression seen in preputial gland. Expressed in the brain where large quantities of ether lipids are synthesized.

The protein localises to the peroxisome membrane. It carries out the reaction a long-chain fatty acyl-CoA + 2 NADPH + 2 H(+) = a long-chain primary fatty alcohol + 2 NADP(+) + CoA. The catalysed reaction is hexadecanoyl-CoA + 2 NADPH + 2 H(+) = hexadecan-1-ol + 2 NADP(+) + CoA. It catalyses the reaction octadecanoyl-CoA + 2 NADPH + 2 H(+) = octadecan-1-ol + 2 NADP(+) + CoA. The enzyme catalyses (9Z)-octadecenoyl-CoA + 2 NADPH + 2 H(+) = (9Z)-octadecen-1-ol + 2 NADP(+) + CoA. It carries out the reaction (9Z,12Z)-octadecadienoyl-CoA + 2 NADPH + 2 H(+) = (9Z,12Z)-octadecadien-1-ol + 2 NADP(+) + CoA. The catalysed reaction is eicosanoyl-CoA + 2 NADPH + 2 H(+) = eicosan-1-ol + 2 NADP(+) + CoA. It catalyses the reaction 16-methylheptadecanoyl-CoA + 2 NADPH + 2 H(+) = 16-methylheptadecan-1-ol + 2 NADP(+) + CoA. The enzyme catalyses 18-methylnonadecanoyl-CoA + 2 NADPH + 2 H(+) = 18-methylnonadecan-1-ol + 2 NADP(+) + CoA. Its function is as follows. Catalyzes the reduction of saturated and unsaturated C16 or C18 fatty acyl-CoA to fatty alcohols. It plays an essential role in the production of ether lipids/plasmalogens which synthesis requires fatty alcohols. In parallel, it is also required for wax monoesters production since fatty alcohols also constitute a substrate for their synthesis. The chain is Fatty acyl-CoA reductase 1 from Mus musculus (Mouse).